A 96-amino-acid polypeptide reads, in one-letter code: Exopolysaccharide production repressor protein (96 aa).

The next 2 membrane-spanning stretches (helical) occupy residues 6–26 and 35–55; these read FVVS…FLTG and TLLC…FLVW. The segment at 64 to 96 is disordered; that stretch reads LSPGQLPADPTNDEKQTGKLSLRRLNRPPHFNS.

It is found in the cell membrane. The protein operates within glycan metabolism; exopolysaccharide biosynthesis. Inhibition of exopolysaccharide synthesis (EPS) and nodulation ability (NOD). The sequence is that of Exopolysaccharide production repressor protein (exoX) from Sinorhizobium fredii (strain NBRC 101917 / NGR234).